The following is a 331-amino-acid chain: MTQNLGISVPMMSSSPLFANAPPEKKGVKNFAIDFLMGGVSAAVSKTAAAPIERVKLLIQNQDEMIKAGRLSEPYKGIGDCFGRTIKDEGFGSLWRGNTANVIRYFPTQALNFAFKDYFKRMFNFKKDKDGYWKWFGGNLASGGAAGASSLFFVYSLDYGRTRLANDAKASKGGGDRQFNGLVDVYRKTLKSDGIAGLYRGFNISCVGIIVYRGLYFGLYDSLKPVLLTGTLQVCSFASFALGWLITNGAGLASYPIDTVRRRMMMTSGEAVKYKSSLDAFQQIPAKEGAKSLFKGAGANILRAIAGAGVLSGYDQLQILFFGKKYGSGGA.

Solcar repeat units lie at residues 29-122 (KNFA…FKRM), 134-226 (KWFG…LKPV), and 238-320 (ASFA…LQIL). 5 consecutive transmembrane segments (helical) span residues 31 to 58 (FAID…VKLL), 99 to 123 (TANV…KRMF), 132 to 152 (YWKW…SSLF), 202 to 223 (FNIS…YDSL), and 237 to 257 (FASF…SYPI). Residues R104 and K116 each coordinate ADP. R261 contributes to the ADP binding site. Residues 261–266 (RRRMMM) form an important for transport activity region. The Nucleotide carrier signature motif motif lies at 261-266 (RRRMMM). The chain crosses the membrane as a helical span at residues 297–317 (AGANILRAIAGAGVLSGYDQL).

This sequence belongs to the mitochondrial carrier (TC 2.A.29) family. As to quaternary structure, monomer.

The protein resides in the mitochondrion inner membrane. The enzyme catalyses ADP(in) + ATP(out) = ADP(out) + ATP(in). The matrix-open state (m-state) is inhibited by the membrane-permeable bongkrekic acid (BKA). The cytoplasmic-open state (c-state) is inhibited by the membrane-impermeable toxic inhibitor carboxyatractyloside (CATR). Its function is as follows. ADP:ATP antiporter that mediates import of ADP into the mitochondrial matrix for ATP synthesis, and export of ATP out to fuel the cell. Cycles between the cytoplasmic-open state (c-state) and the matrix-open state (m-state): operates by the alternating access mechanism with a single substrate-binding site intermittently exposed to either the cytosolic (c-state) or matrix (m-state) side of the inner mitochondrial membrane. This Triticum aestivum (Wheat) protein is ADP,ATP carrier protein 2, mitochondrial (ANT-G2).